A 138-amino-acid chain; its full sequence is Large ribosomal subunit protein bL19 (138 aa).

Belongs to the bacterial ribosomal protein bL19 family.

Its function is as follows. This protein is located at the 30S-50S ribosomal subunit interface and may play a role in the structure and function of the aminoacyl-tRNA binding site. This Leptospira interrogans serogroup Icterohaemorrhagiae serovar copenhageni (strain Fiocruz L1-130) protein is Large ribosomal subunit protein bL19.